Here is a 136-residue protein sequence, read N- to C-terminus: Transcription antitermination protein NusB (136 aa).

This sequence belongs to the NusB family.

Involved in transcription antitermination. Required for transcription of ribosomal RNA (rRNA) genes. Binds specifically to the boxA antiterminator sequence of the ribosomal RNA (rrn) operons. This chain is Transcription antitermination protein NusB, found in Arthrobacter sp. (strain FB24).